Reading from the N-terminus, the 69-residue chain is Dermaseptin-H3 (69 aa).

The signal sequence occupies residues 1–22; it reads MAFLKKSLFLVLFLGMVSLSIC. The propeptide occupies 23–43; the sequence is EEEKRENEDEEKQEDDEQSEM. The tract at residues 24-44 is disordered; sequence EEKRENEDEEKQEDDEQSEMK. The span at 30-40 shows a compositional bias: acidic residues; sequence EDEEKQEDDEQ. Leu66 is modified (leucine amide). The propeptide occupies 68–69; sequence EQ.

The protein belongs to the frog skin active peptide (FSAP) family. Dermaseptin subfamily. In terms of tissue distribution, expressed by the skin glands.

Its subcellular location is the secreted. Its function is as follows. Possesses a potent antimicrobial activity against Gram-positive and Gram-negative bacteria. Probably acts by disturbing membrane functions with its amphipathic structure. The polypeptide is Dermaseptin-H3 (Pithecopus azureus (Orange-legged monkey tree frog)).